We begin with the raw amino-acid sequence, 302 residues long: Digeranylgeranylglyceryl phosphate synthase (302 aa).

Transmembrane regions (helical) follow at residues 21 to 41, 43 to 63, 103 to 123, 144 to 164, 167 to 187, 218 to 238, 244 to 264, and 282 to 302; these read LVVA…IYGG, IVSS…AGGY, IGLI…FAVL, IVIA…ASCM, GKVV…LLVL, AYMA…FPYI, MAYL…LAIL, and ARSA…AGLM.

This sequence belongs to the UbiA prenyltransferase family. DGGGP synthase subfamily. Mg(2+) serves as cofactor.

Its subcellular location is the cell membrane. It catalyses the reaction sn-3-O-(geranylgeranyl)glycerol 1-phosphate + (2E,6E,10E)-geranylgeranyl diphosphate = 2,3-bis-O-(geranylgeranyl)-sn-glycerol 1-phosphate + diphosphate. It functions in the pathway membrane lipid metabolism; glycerophospholipid metabolism. Its function is as follows. Prenyltransferase that catalyzes the transfer of the geranylgeranyl moiety of geranylgeranyl diphosphate (GGPP) to the C2 hydroxyl of (S)-3-O-geranylgeranylglyceryl phosphate (GGGP). This reaction is the second ether-bond-formation step in the biosynthesis of archaeal membrane lipids. The polypeptide is Digeranylgeranylglyceryl phosphate synthase (Hyperthermus butylicus (strain DSM 5456 / JCM 9403 / PLM1-5)).